The primary structure comprises 179 residues: Large ribosomal subunit protein uL6 (179 aa).

This sequence belongs to the universal ribosomal protein uL6 family. As to quaternary structure, part of the 50S ribosomal subunit.

Functionally, this protein binds to the 23S rRNA, and is important in its secondary structure. It is located near the subunit interface in the base of the L7/L12 stalk, and near the tRNA binding site of the peptidyltransferase center. This chain is Large ribosomal subunit protein uL6, found in Beutenbergia cavernae (strain ATCC BAA-8 / DSM 12333 / CCUG 43141 / JCM 11478 / NBRC 16432 / NCIMB 13614 / HKI 0122).